Here is a 124-residue protein sequence, read N- to C-terminus: Ribonuclease pancreatic (124 aa).

Positions Lys-1–Met-13 are enriched in basic and acidic residues. A disordered region spans residues Lys-1–Tyr-25. Substrate is bound by residues Lys-7 and Arg-10. His-12 serves as the catalytic Proton acceptor. Intrachain disulfides connect Cys-26–Cys-84, Cys-40–Cys-95, Cys-58–Cys-110, and Cys-65–Cys-72. Residues Lys-41–Thr-45, Lys-66, and Arg-85 contribute to the substrate site. His-119 serves as the catalytic Proton donor.

This sequence belongs to the pancreatic ribonuclease family. Monomer. Interacts with and forms tight 1:1 complexes with RNH1. Dimerization of two such complexes may occur. Interaction with RNH1 inhibits this protein. Pancreas.

It localises to the secreted. The enzyme catalyses an [RNA] containing cytidine + H2O = an [RNA]-3'-cytidine-3'-phosphate + a 5'-hydroxy-ribonucleotide-3'-[RNA].. The catalysed reaction is an [RNA] containing uridine + H2O = an [RNA]-3'-uridine-3'-phosphate + a 5'-hydroxy-ribonucleotide-3'-[RNA].. Its function is as follows. Endonuclease that catalyzes the cleavage of RNA on the 3' side of pyrimidine nucleotides. Acts on single-stranded and double-stranded RNA. This chain is Ribonuclease pancreatic (RNASE1), found in Ondatra zibethicus (Muskrat).